An 899-amino-acid polypeptide reads, in one-letter code: MLKAVLERTIGSKSKRDLKDYLPTLRNINKLERWALLLSDEDFSKETEKLKDELKSGNSLESILERAFTLSREAARRRLKERPYDVQIIAGLALHKGKIIEMKTGEGKTLSSVQAAYLNSLTGDGVIIVTVNDYLAERDSNWMKPVFDLLGVSVGVVLSNMDYELRKAQYAKDITYVTNNELGFDYLRDNMRYDLNEKSLRKFNYCIIDEIDSILIDEARTPLIISGPTEGNTNAYLEVNSLVSFLKECSKDSKTGDYPLEIDDLDGDYTVDEKAKRISFTAKGLNNLEQLLVSKGIISGSMYTDSNFNYVHYMTQALKAHLLFLKNREYIVGDSGVEIVDEFTGRVLTGRRYSDGLHQAIEAKEGVRVANENKTMATITFQNLFRMFNKISGMTGTADTEAKEFHRIYNLDVVVVPTNRLLARIDEDDTIYYTEEFKFNAITDEVYKTYKKGQPVLVGTVSIEKSEILSAMFKSRGIKHEVLNAKNHSREAFIIAEAGAKHAVTIATNMAGRGTDIKLGGNIEHRVRKKIGTNVSLEEFQEAVKNEREDYLKDYNEVKSLGGLYVIGSERHESRRIDNQLRGRSGRQGDPGRSRFYVSLEDDLMRLFAGDNLRSLMGKLGMATGEPITHSLLTKSLINAQKRVEDRNFEIRKHLLEYDDVITKQRDFIYAQRNSILEDTAIKDRILIALEEYLTFLLEGAKSSTVSNVFLNEVNLIFAYMLEGLGSIENINSLDLKAKLMQIAKANLDEKENSIGRDLFNGFLRYEYLRNIDSKFQEHLANLDSLREAVYLRSYANKNPITEYKEEGFLIFSELIKDIKVSTIRRVLQLKLDSNSSNFKSVKKSKNVNSIHKELSGIVINENKSVSNVQVVRSSPKIGRNEPCYCGSGKKYKNCHGKS.

Residues Gln-87, 105-109 (GEGKT), and Asp-516 contribute to the ATP site. Residues Cys-884, Cys-886, Cys-895, and His-896 each coordinate Zn(2+).

The protein belongs to the SecA family. As to quaternary structure, monomer and homodimer. Part of the essential Sec protein translocation apparatus which comprises SecA, SecYEG and auxiliary proteins SecDF. Other proteins may also be involved. Zn(2+) is required as a cofactor.

The protein localises to the cell inner membrane. The protein resides in the cytoplasm. The enzyme catalyses ATP + H2O + cellular proteinSide 1 = ADP + phosphate + cellular proteinSide 2.. Functionally, part of the Sec protein translocase complex. Interacts with the SecYEG preprotein conducting channel. Has a central role in coupling the hydrolysis of ATP to the transfer of proteins into and across the cell membrane, serving as an ATP-driven molecular motor driving the stepwise translocation of polypeptide chains across the membrane. The chain is Protein translocase subunit SecA from Borreliella afzelii (strain PKo) (Borrelia afzelii).